The following is a 422-amino-acid chain: Phytoene synthase, chloroplastic (422 aa).

The transit peptide at 1-83 (MSLASSLVVS…GSVIVASMVA (83 aa)) directs the protein to the chloroplast.

The protein belongs to the phytoene/squalene synthase family. As to quaternary structure, monomer.

It is found in the plastid. The protein resides in the chloroplast. The enzyme catalyses 2 (2E,6E,10E)-geranylgeranyl diphosphate = 15-cis-phytoene + 2 diphosphate. The protein operates within carotenoid biosynthesis; phytoene biosynthesis; all-trans-phytoene from geranylgeranyl diphosphate: step 1/1. Its function is as follows. Catalyzes the reaction from prephytoene diphosphate to phytoene. The polypeptide is Phytoene synthase, chloroplastic (PSY) (Cucumis melo (Muskmelon)).